Consider the following 123-residue polypeptide: Histone H2B (123 aa).

The segment at 1–31 (MPPKTSGKAAKKAGKAQKNITKNDKKKKRKR) is disordered. Residue Pro-2 is modified to N-methylproline; partial. At Lys-44 the chain carries N6-succinyllysine. A glycan (O-linked (GlcNAc) serine) is linked at Ser-110. N6-succinyllysine occurs at positions 114 and 118. Lys-118 participates in a covalent cross-link: Glycyl lysine isopeptide (Lys-Gly) (interchain with G-Cter in ubiquitin).

The protein belongs to the histone H2B family. The nucleosome is a histone octamer containing two molecules each of H2A, H2B, H3 and H4 assembled in one H3-H4 heterotetramer and two H2A-H2B heterodimers. The octamer wraps approximately 147 bp of DNA. Post-translationally, phosphorylated by the catalytic component of the Dbf4-dependent kinase (DDK) complex Cdc7. Monoubiquitination of Lys-118 by Bre1 gives a specific tag for epigenetic transcriptional activation and is also prerequisite for histone H3 'Lys-4' and 'Lys-79' methylation. Deubiquitination of Lys-118 by the SAGA complex is involved in activating transcription of a large subset of genes. In terms of processing, methylation at Pro-2 increases upon heat shock. Post-translationally, glcNAcylation at Ser-110 promotes monoubiquitination of Lys-118. It fluctuates in response to extracellular glucose, and associates with transcribed genes.

The protein localises to the nucleus. The protein resides in the chromosome. Its function is as follows. Core component of nucleosome. Nucleosomes wrap and compact DNA into chromatin, limiting DNA accessibility to the cellular machineries which require DNA as a template. Histones thereby play a central role in transcription regulation, DNA repair, DNA replication and chromosomal stability. DNA accessibility is regulated via a complex set of post-translational modifications of histones, also called histone code, and nucleosome remodeling. In Drosophila sechellia (Fruit fly), this protein is Histone H2B (His2B).